The following is a 364-amino-acid chain: F-box/LRR-repeat protein At1g55660 (364 aa).

The F-box domain maps to 52 to 98 (MDKISQLPDELLVKVLSFLSTKDAVSTSILSMRWKSLWMWLPKLEYN). LRR repeat units lie at residues 158–179 (NVRELSLKLFNFAELPTKLPKS), 185–206 (SIVILKLKDEILVDVPRKVCLP), 207–228 (SLKTLFLGRVTYSDANSLHRLL), 233–254 (VLEDLVMERDKIDNLGKLSVIV), 256–277 (SLQRLTLKMSRPCHLDGLKMNS), and 279–300 (SLKYLKVIDERLESDSDDESDS).

The sequence is that of F-box/LRR-repeat protein At1g55660 from Arabidopsis thaliana (Mouse-ear cress).